The following is a 1022-amino-acid chain: ATPase MORC2B (1022 aa).

N-acetylalanine is present on Ala-2. ATP is bound by residues Asn-39, 87-89 (SAK), and 99-105 (RYGNGLK). Asn-39 lines the Mg(2+) pocket. The stretch at 285 to 362 (KTRAEQEVKK…RDAKQQALKE (78 aa)) forms a coiled coil. Lys-427 provides a ligand contact to ATP. Residues 490–544 (AMQVPTTIQCDLCLKWRTLPFQLSAVEEGYPINWVCSMNPDPEQDQCEAFELKQK) form a CW-type zinc finger. The Zn(2+) site is built by Cys-499, Cys-502, Cys-525, and Cys-536. The stretch at 555–583 (KTQEERQKQLTEKIQQEQRKLKALKKIKP) forms a coiled coil. The residue at position 615 (Ser-615) is a Phosphoserine. Lys-649 is covalently cross-linked (Glycyl lysine isopeptide (Lys-Gly) (interchain with G-Cter in SUMO2)). Residues Ser-690, Ser-724, Ser-733, and Ser-737 each carry the phosphoserine modification. Lys-758 participates in a covalent cross-link: Glycyl lysine isopeptide (Lys-Gly) (interchain with G-Cter in SUMO2). A phosphoserine mark is found at Ser-768 and Ser-770. Thr-827 is modified (phosphothreonine). 2 positions are modified to phosphoserine: Ser-846 and Ser-851. A Glycyl lysine isopeptide (Lys-Gly) (interchain with G-Cter in SUMO2) cross-link involves residue Lys-922. The stretch at 962 to 1001 (QAKVSEESLRISQKKLQETEEKLQKLRTNIQTLLQMAQQG) forms a coiled coil.

As to quaternary structure, interacts with Morc2a. Protein is abundant in testes but not detected in other adult tissues examined (at protein level). Detected in germ cells with a distinct developmental-specific expression pattern but not in somatic cells such as Sertoli cells.

The protein localises to the nucleus. It catalyses the reaction ATP + H2O = ADP + phosphate + H(+). Functionally, required for chromosomal synapsis and meiotic recombination in males and females. The protein is ATPase MORC2B of Mus musculus (Mouse).